A 381-amino-acid chain; its full sequence is Chitin deacetylase 8 (381 aa).

The signal sequence occupies residues 1–18 (MKRLSVLCSLLLVAAALG). 2 cysteine pairs are disulfide-bonded: C27/C39 and C32/C37. Zn(2+)-binding residues include D63, H117, and H121. 5 cysteine pairs are disulfide-bonded: C86-C335, C211-C216, C240-C246, C343-C365, and C348-C368. N-linked (GlcNAc...) asparagine glycosylation is present at N171.

This sequence belongs to the carbohydrate esterase 4 (CE4) family. The cofactor is Zn(2+). As to expression, strongly expressed in the midgut. Has little or no expression in other tissues tested.

Its subcellular location is the secreted. It carries out the reaction [(1-&gt;4)-N-acetyl-beta-D-glucosaminyl](n) + n H2O = chitosan + n acetate. Functionally, hydrolyzes the N-acetamido groups of N-acetyl-D-glucosamine (GlcNAc) residues in chitin. Shows activity towards the chitinous oligomers GlcNAc(3), GlcNAc(4), GlcNAc(5) and GlcNAc(6), but not GlcNAc or GlcNAc(2). Requires the substrate to occupy subsites 0, +1, and +2 for optimum catalysis. The sequence is that of Chitin deacetylase 8 from Bombyx mori (Silk moth).